We begin with the raw amino-acid sequence, 527 residues long: MRQLISPEALRAFRQSVQGSVGFVPTMGALHAGHRSLIERSRQQDDVVIVSIFVNPRQFGPQEDLSRYPQTLDADLALCEAAGVDAVFCPTAEALYPRPSDRSTGVQPPAELIQSLCGRQRPGHFQGVATVVLKLLQLVQPQRAYFGEKDAQQLRVIQRLVEDFNLPIAIVPCPTVREPDGLALSSRNRYLTFEERSQASGLYRALRAAAECFQAGSRDSQELVAAATAVLATTPAVQLEYCDCVDADSLQPLTQIPDRALLAIAARVGTARLIDNLTLQGRRPIIAIDGPAGAGKSTVTKRLAQQLGLLYLDTGAMYRAVTWLVQQQGIDPQDPIVLAELLAQADLQLRSQPAADGSEQLQVLIQGNDVTAAIRTPTVTAQVSAIAALPLVRQFLVEQQRQLGQRGGLVAEGRDIGTHVFPDAELKIFLTATNAERARRRALDLEAQGLTVDLAQLEAEIRDRDRQDSERAIAPLCKAEDAVEVLTDGLSIEAVTDQIIRLYRDRGLGDSSPQATPGQTPSPLSLG.

The pantoate--beta-alanine ligase stretch occupies residues 1–277; the sequence is MRQLISPEAL…VGTARLIDNL (277 aa). 27–34 contacts ATP; sequence MGALHAGH. The Proton donor role is filled by histidine 34. Glutamine 58 is a (R)-pantoate binding site. Glutamine 58 serves as a coordination point for beta-alanine. 147-150 is a binding site for ATP; the sequence is GEKD. Glutamine 153 is a binding site for (R)-pantoate. ATP-binding positions include valine 176 and 184-187; that span reads LSSR. A cytidylate kinase region spans residues 278–527; the sequence is TLQGRRPIIA…GQTPSPLSLG (250 aa). The interval 507-527 is disordered; that stretch reads GLGDSSPQATPGQTPSPLSLG. The span at 511 to 527 shows a compositional bias: polar residues; it reads SSPQATPGQTPSPLSLG.

In the N-terminal section; belongs to the pantothenate synthetase family. It in the C-terminal section; belongs to the cytidylate kinase family. Type 1 subfamily.

The protein localises to the cytoplasm. It catalyses the reaction (R)-pantoate + beta-alanine + ATP = (R)-pantothenate + AMP + diphosphate + H(+). It carries out the reaction CMP + ATP = CDP + ADP. The catalysed reaction is dCMP + ATP = dCDP + ADP. The protein operates within cofactor biosynthesis; (R)-pantothenate biosynthesis; (R)-pantothenate from (R)-pantoate and beta-alanine: step 1/1. Its function is as follows. Catalyzes the condensation of pantoate with beta-alanine in an ATP-dependent reaction via a pantoyl-adenylate intermediate. Catalyzes the transfer of a phosphate group from ATP to either CMP or dCMP to form CDP or dCDP and ADP, respectively. The sequence is that of Bifunctional pantoate ligase/cytidylate kinase from Synechococcus elongatus (strain ATCC 33912 / PCC 7942 / FACHB-805) (Anacystis nidulans R2).